Reading from the N-terminus, the 615-residue chain is Chaperone protein HtpG (615 aa).

Positions 1–335 are a; substrate-binding; sequence MSAEKQTHGF…APDLPLNVSR (335 aa). The interval 336–541 is b; sequence ELLQDYGPVQ…EDQLGPQMRR (206 aa). The c stretch occupies residues 542–615; sequence MLEAAGQPVP…RMQALLSQSV (74 aa).

The protein belongs to the heat shock protein 90 family. Homodimer.

It is found in the cytoplasm. Functionally, molecular chaperone. Has ATPase activity. This chain is Chaperone protein HtpG, found in Alcanivorax borkumensis (strain ATCC 700651 / DSM 11573 / NCIMB 13689 / SK2).